The chain runs to 178 residues: C-phycoerythrin class 2 subunit beta (178 aa).

Phycourobilin is bound by residues Cys-50 and Cys-61. Residues Cys-82 and Cys-159 each coordinate (2R,3E)-phycoerythrobilin.

Belongs to the phycobiliprotein family. As to quaternary structure, heterodimer of an alpha and a beta chain. In terms of processing, contains two covalently linked phycoerythrobilin chromophores and one covalently linked phycourobilin chromophore.

The protein localises to the cellular thylakoid membrane. Functionally, light-harvesting photosynthetic bile pigment-protein from the phycobiliprotein complex. This is C-phycoerythrin class 2 subunit beta (mpeB) from Synechococcus sp. (strain WH8103).